The primary structure comprises 1233 residues: Integrator complex subunit 4 homolog (1233 aa).

HEAT repeat units follow at residues 236-273 and 275-310; these read SLINQIIEYIEPLLHSTSPLVRRETIVLLGSIVKNLDK and SEEIQILLLNYLKDTDFRVREASLKSLSVIFQRGAS. Residues 426–473 form a disordered region; the sequence is RLQQKQQQQQQQQQQQQQQPPQQQPSQQPNQQPNQQQTNVSGTHIATP. Over residues 428–462 the composition is skewed to low complexity; that stretch reads QQKQQQQQQQQQQQQQQPPQQQPSQQPNQQPNQQQ. HEAT repeat units follow at residues 487 to 524, 525 to 561, and 563 to 597; these read ILESGVIGAFIQGLEDEFYEVRSSAIDSMCELSVRNDE, FAQKNIDFLVDIFNDEIESVRINSINSLRKIGNNVVI, and EEQLHIILANLESSSKEERQSLHRLLTSIHLSNYS. The span at 767–792 shows a compositional bias: low complexity; sequence NNNTNNNNNNNNNNNNNNNNNNNNNN. 2 disordered regions span residues 767–796 and 993–1057; these read NNNTNNNNNNNNNNNNNNNNNNNNNNDEND and DKKL…TTTT. The span at 1000 to 1013 shows a compositional bias: acidic residues; that stretch reads EENEENEENENNEN. Over residues 1014–1030 the composition is skewed to basic and acidic residues; it reads ENEKENGKNKEKEKNEN. Over residues 1046–1057 the composition is skewed to low complexity; the sequence is KTTSELIKTTTT.

The protein belongs to the Integrator subunit 4 family. Component of the Integrator complex. The core complex associates with protein phosphatase 2A subunits, to form the Integrator-PP2A (INTAC) complex.

It is found in the nucleus. Its subcellular location is the cytoplasm. Component of the integrator complex, a multiprotein complex that terminates RNA polymerase II (Pol II) transcription in the promoter-proximal region of genes. The integrator complex provides a quality checkpoint during transcription elongation by driving premature transcription termination of transcripts that are unfavorably configured for transcriptional elongation: the complex terminates transcription by (1) catalyzing dephosphorylation of the C-terminal domain (CTD) of Pol II subunit polr2a, (2) degrading the exiting nascent RNA transcript via endonuclease activity and (3) promoting the release of Pol II from bound DNA. The integrator complex is also involved in terminating the synthesis of non-coding Pol II transcripts, such as enhancer RNAs (eRNAs), small nuclear RNAs (snRNAs), telomerase RNAs and long non-coding RNAs (lncRNAs). The polypeptide is Integrator complex subunit 4 homolog (ints4) (Dictyostelium discoideum (Social amoeba)).